Here is a 241-residue protein sequence, read N- to C-terminus: ATP synthase subunit a (241 aa).

6 helical membrane-spanning segments follow: residues 19–39 (AVLIAHLLLVAVIVIMIAKMA), 80–100 (LVAAVGLFIFVSNVIGIIPGF), 106–126 (NINVTLPLALMVFVYYNYEGI), 135–155 (FAHFAGPVKLLAPLMFPIEIV), 177–197 (LFLWVLLMLVPFVAPLPAYLL), and 203–223 (LLQTFVFMILIYVYLAGAVAI).

This sequence belongs to the ATPase A chain family. F-type ATPases have 2 components, CF(1) - the catalytic core - and CF(0) - the membrane proton channel. CF(1) has five subunits: alpha(3), beta(3), gamma(1), delta(1), epsilon(1). CF(0) has three main subunits: a(1), b(2) and c(9-12). The alpha and beta chains form an alternating ring which encloses part of the gamma chain. CF(1) is attached to CF(0) by a central stalk formed by the gamma and epsilon chains, while a peripheral stalk is formed by the delta and b chains.

It localises to the cell inner membrane. Functionally, key component of the proton channel; it plays a direct role in the translocation of protons across the membrane. This chain is ATP synthase subunit a, found in Sulfurovum sp. (strain NBC37-1).